Reading from the N-terminus, the 287-residue chain is Phosphoribosylaminoimidazole-succinocarboxamide synthase (287 aa).

It belongs to the SAICAR synthetase family.

The enzyme catalyses 5-amino-1-(5-phospho-D-ribosyl)imidazole-4-carboxylate + L-aspartate + ATP = (2S)-2-[5-amino-1-(5-phospho-beta-D-ribosyl)imidazole-4-carboxamido]succinate + ADP + phosphate + 2 H(+). The protein operates within purine metabolism; IMP biosynthesis via de novo pathway; 5-amino-1-(5-phospho-D-ribosyl)imidazole-4-carboxamide from 5-amino-1-(5-phospho-D-ribosyl)imidazole-4-carboxylate: step 1/2. The chain is Phosphoribosylaminoimidazole-succinocarboxamide synthase from Neisseria meningitidis serogroup A / serotype 4A (strain DSM 15465 / Z2491).